The sequence spans 333 residues: Ketol-acid reductoisomerase (NADP(+)) (333 aa).

The 171-residue stretch at 1-171 (MSNHTQPKIA…GGARANIIKT (171 aa)) folds into the KARI N-terminal Rossmann domain. NADP(+) contacts are provided by residues 14-17 (YGSQ), Arg37, Thr42, and 72-75 (DMVQ). His97 is an active-site residue. Residue Gly123 coordinates NADP(+). A KARI C-terminal knotted domain is found at 172–317 (TFKEETETDL…KKLRAKMVWL (146 aa)). Residues Asp180, Glu184, Glu216, and Glu220 each contribute to the Mg(2+) site. A substrate-binding site is contributed by Ser241.

It belongs to the ketol-acid reductoisomerase family. The cofactor is Mg(2+).

It catalyses the reaction (2R)-2,3-dihydroxy-3-methylbutanoate + NADP(+) = (2S)-2-acetolactate + NADPH + H(+). The catalysed reaction is (2R,3R)-2,3-dihydroxy-3-methylpentanoate + NADP(+) = (S)-2-ethyl-2-hydroxy-3-oxobutanoate + NADPH + H(+). The protein operates within amino-acid biosynthesis; L-isoleucine biosynthesis; L-isoleucine from 2-oxobutanoate: step 2/4. It functions in the pathway amino-acid biosynthesis; L-valine biosynthesis; L-valine from pyruvate: step 2/4. Its function is as follows. Involved in the biosynthesis of branched-chain amino acids (BCAA). Catalyzes an alkyl-migration followed by a ketol-acid reduction of (S)-2-acetolactate (S2AL) to yield (R)-2,3-dihydroxy-isovalerate. In the isomerase reaction, S2AL is rearranged via a Mg-dependent methyl migration to produce 3-hydroxy-3-methyl-2-ketobutyrate (HMKB). In the reductase reaction, this 2-ketoacid undergoes a metal-dependent reduction by NADPH to yield (R)-2,3-dihydroxy-isovalerate. This Xanthomonas axonopodis pv. citri (strain 306) protein is Ketol-acid reductoisomerase (NADP(+)).